Here is a 643-residue protein sequence, read N- to C-terminus: Pescadillo homolog (643 aa).

Residues 319 to 412 (KLKTLFKGLK…RLLPTNKYFM (94 aa)) form the BRCT domain. 3 disordered regions span residues 437-475 (AARK…PENE), 492-571 (TDSL…YREN), and 609-643 (DKNA…QILA). Over residues 464–475 (SDDEEVQDPENE) the composition is skewed to acidic residues. Positions 492 to 518 (TDSLNSGKKEGADDATDNGKDAAEKKQ) are enriched in basic and acidic residues. The span at 524 to 544 (GESDDEDEEEEDDDDGEEEED) shows a compositional bias: acidic residues. Positions 569–643 (RENEAEKKIV…QKQQRKQILA (75 aa)) form a coiled coil. The span at 609 to 635 (DKNARLLANKRERIEKQKRAEQMEKQK) shows a compositional bias: basic and acidic residues.

This sequence belongs to the pescadillo family.

It localises to the nucleus. It is found in the nucleolus. Its subcellular location is the nucleoplasm. Its function is as follows. Required for maturation of ribosomal RNAs and formation of the large ribosomal subunit. The polypeptide is Pescadillo homolog (Anopheles gambiae (African malaria mosquito)).